We begin with the raw amino-acid sequence, 105 residues long: Platelet factor 4 (105 aa).

The signal sequence occupies residues 1–29 (MSAAAVFRGLRPSPELLLLGLLLLPAVVA). O-linked (GalNAc...) threonine; partial glycosylation is present at Thr-31. 2 cysteine pairs are disulfide-bonded: Cys-44/Cys-71 and Cys-46/Cys-87. Ser-61 is modified (phosphoserine). 96-102 (KKIIKKL) serves as a coordination point for heparin.

Belongs to the intercrine alpha (chemokine CxC) family. As to quaternary structure, homotetramer. Interacts with TNFAIP6 (via Link domain). Interacts with CCR1. Interacts with CXCR3. Interacts with THBD; this interaction enhances generation of activated protein C. Post-translationally, O-linked glycan consists of Gal-GalNAc disaccharide which is modified with sialic acid residues (microheterogeneity).

It is found in the secreted. Functionally, chemokine released during platelet aggregation that plays a role in different biological processes including hematopoiesis, cell proliferation, differentiation, and activation. Acts via different functional receptors including CCR1, CXCR3A or CXCR3B. Upon interaction with CXCR3A receptor, induces activated T-lymphocytes migration mediated via downstream Ras/extracellular signal-regulated kinase (ERK) signaling. Neutralizes the anticoagulant effect of heparin by binding more strongly to heparin than to the chondroitin-4-sulfate chains of the carrier molecule. Plays a role in the inhibition of hematopoiesis and in the maintenance of hematopoietic stem cell (HSC) quiescence. Chemotactic for neutrophils and monocytes via CCR1. Inhibits endothelial cell proliferation. In cooperation with toll-like receptor 8/TLR8, induces chromatin remodeling and activates inflammatory gene expression via the TBK1-IRF5 axis. In addition, induces myofibroblast differentiation and collagen synthesis in different precursor cells, including endothelial cells, by stimulating endothelial-to-mesenchymal transition. Interacts with thrombomodulin/THBD to enhance the activation of protein C and thus potentiates its anticoagulant activity. The polypeptide is Platelet factor 4 (Pf4) (Rattus norvegicus (Rat)).